Reading from the N-terminus, the 231-residue chain is Two-component response regulator ORR1 (231 aa).

Positions 9 to 135 (RVLLVDDSPV…DVQRLRKCSP (127 aa)) constitute a Response regulatory domain. Aspartate 68 is subject to 4-aspartylphosphate.

The protein belongs to the ARR family. Type-A subfamily. In terms of processing, two-component system major event consists of a His-to-Asp phosphorelay between a sensor histidine kinase (HK) and a response regulator (RR). In plants, the His-to-Asp phosphorelay involves an additional intermediate named Histidine-containing phosphotransfer protein (HPt). This multistep phosphorelay consists of a His-Asp-His-Asp sequential transfer of a phosphate group between first a His and an Asp of the HK protein, followed by the transfer to a conserved His of the HPt protein and finally the transfer to an Asp in the receiver domain of the RR protein. Expressed in mature leaves and flowers, and at low levels in roots and shoots.

Functions as a response regulator involved in His-to-Asp phosphorelay signal transduction system. Phosphorylation of the Asp residue in the receiver domain activates the ability of the protein to promote the transcription of target genes. Type-A response regulators seem to act as negative regulators of the cytokinin signaling. The protein is Two-component response regulator ORR1 of Oryza sativa subsp. indica (Rice).